A 358-amino-acid chain; its full sequence is Chorismate synthase (358 aa).

Residue arginine 47 coordinates NADP(+). FMN-binding positions include 124–126, 240–241, glycine 284, 299–303, and arginine 325; these read RSS, NA, and KPIAT.

It belongs to the chorismate synthase family. Homotetramer. Requires FMNH2 as cofactor.

It catalyses the reaction 5-O-(1-carboxyvinyl)-3-phosphoshikimate = chorismate + phosphate. It participates in metabolic intermediate biosynthesis; chorismate biosynthesis; chorismate from D-erythrose 4-phosphate and phosphoenolpyruvate: step 7/7. In terms of biological role, catalyzes the anti-1,4-elimination of the C-3 phosphate and the C-6 proR hydrogen from 5-enolpyruvylshikimate-3-phosphate (EPSP) to yield chorismate, which is the branch point compound that serves as the starting substrate for the three terminal pathways of aromatic amino acid biosynthesis. This reaction introduces a second double bond into the aromatic ring system. The chain is Chorismate synthase from Bacteroides thetaiotaomicron (strain ATCC 29148 / DSM 2079 / JCM 5827 / CCUG 10774 / NCTC 10582 / VPI-5482 / E50).